Here is a 314-residue protein sequence, read N- to C-terminus: NADH-ubiquinone oxidoreductase chain 1 (314 aa).

The next 8 membrane-spanning stretches (helical) occupy residues 5-25 (IMPL…VAFL), 78-98 (FSPI…PYLI), 105-125 (LGVL…MIAG), 151-171 (LALI…LNFY), 176-196 (YIWF…SCLA), 227-247 (LIFL…VVIF), 251-271 (DIYS…FIWV), and 294-314 (LSLN…SLLF).

Belongs to the complex I subunit 1 family.

It localises to the mitochondrion inner membrane. It catalyses the reaction a ubiquinone + NADH + 5 H(+)(in) = a ubiquinol + NAD(+) + 4 H(+)(out). In terms of biological role, core subunit of the mitochondrial membrane respiratory chain NADH dehydrogenase (Complex I) that is believed to belong to the minimal assembly required for catalysis. Complex I functions in the transfer of electrons from NADH to the respiratory chain. The immediate electron acceptor for the enzyme is believed to be ubiquinone. This chain is NADH-ubiquinone oxidoreductase chain 1 (ND1), found in Anopheles quadrimaculatus (Common malaria mosquito).